The sequence spans 468 residues: UDP-N-acetylmuramate--L-alanine ligase (468 aa).

114-120 (GTHGKTT) lines the ATP pocket.

This sequence belongs to the MurCDEF family.

Its subcellular location is the cytoplasm. The catalysed reaction is UDP-N-acetyl-alpha-D-muramate + L-alanine + ATP = UDP-N-acetyl-alpha-D-muramoyl-L-alanine + ADP + phosphate + H(+). It participates in cell wall biogenesis; peptidoglycan biosynthesis. In terms of biological role, cell wall formation. This is UDP-N-acetylmuramate--L-alanine ligase from Brucella anthropi (strain ATCC 49188 / DSM 6882 / CCUG 24695 / JCM 21032 / LMG 3331 / NBRC 15819 / NCTC 12168 / Alc 37) (Ochrobactrum anthropi).